The following is a 42-amino-acid chain: Photosystem I reaction center subunit IX (42 aa).

Residues 7-27 (YLSVAPVLSTLWFVALAGLLI) traverse the membrane as a helical segment.

It belongs to the PsaJ family.

It is found in the plastid. The protein localises to the chloroplast thylakoid membrane. In terms of biological role, may help in the organization of the PsaE and PsaF subunits. The protein is Photosystem I reaction center subunit IX of Atropa belladonna (Belladonna).